Consider the following 317-residue polypeptide: NAD kinase (317 aa).

D82 acts as the Proton acceptor in catalysis. Residues D82–G83, R87, N157–E158, D187, and T198–S203 contribute to the NAD(+) site.

Belongs to the NAD kinase family. Requires a divalent metal cation as cofactor.

The protein resides in the cytoplasm. It carries out the reaction NAD(+) + ATP = ADP + NADP(+) + H(+). Involved in the regulation of the intracellular balance of NAD and NADP, and is a key enzyme in the biosynthesis of NADP. Catalyzes specifically the phosphorylation on 2'-hydroxyl of the adenosine moiety of NAD to yield NADP. In Corynebacterium diphtheriae (strain ATCC 700971 / NCTC 13129 / Biotype gravis), this protein is NAD kinase.